The following is a 259-amino-acid chain: MTELTAAAQRALTLMDLTTLNDDDTDEKVIALCRQANSPAGHTAAICIYPRFIPAARKALREQGTPDIRIATVTNFPHGNDDIEIALAETRAAIAYGADEVDVVFPYRALIAGNEQVGFELVKQCKQACLAANVLLKVIIETGELKQANLIRKASEIAINAGADFIKTSTGKVPVNATLESAELMMSVIRDMGVAKTVGFKPAGGVRTAEDALHYLQLADRILGEGWADARHFRFGASSLLASLLATLGHGAEPSGSGY.

The active-site Proton donor/acceptor is aspartate 102. Residue lysine 167 is the Schiff-base intermediate with acetaldehyde of the active site. The active-site Proton donor/acceptor is the lysine 201.

Belongs to the DeoC/FbaB aldolase family. DeoC type 2 subfamily.

Its subcellular location is the cytoplasm. It carries out the reaction 2-deoxy-D-ribose 5-phosphate = D-glyceraldehyde 3-phosphate + acetaldehyde. It functions in the pathway carbohydrate degradation; 2-deoxy-D-ribose 1-phosphate degradation; D-glyceraldehyde 3-phosphate and acetaldehyde from 2-deoxy-alpha-D-ribose 1-phosphate: step 2/2. In terms of biological role, catalyzes a reversible aldol reaction between acetaldehyde and D-glyceraldehyde 3-phosphate to generate 2-deoxy-D-ribose 5-phosphate. The polypeptide is Deoxyribose-phosphate aldolase (Serratia proteamaculans (strain 568)).